A 199-amino-acid polypeptide reads, in one-letter code: dITP/XTP pyrophosphatase (199 aa).

Residue 7 to 12 (SNNRGK) participates in substrate binding. The active-site Proton acceptor is the aspartate 68. Mg(2+) is bound at residue aspartate 68. Residues alanine 69, 154–157 (FGFD), lysine 177, and 182–183 (HR) contribute to the substrate site.

Belongs to the HAM1 NTPase family. As to quaternary structure, homodimer. It depends on Mg(2+) as a cofactor.

The catalysed reaction is XTP + H2O = XMP + diphosphate + H(+). The enzyme catalyses dITP + H2O = dIMP + diphosphate + H(+). It carries out the reaction ITP + H2O = IMP + diphosphate + H(+). Its function is as follows. Pyrophosphatase that catalyzes the hydrolysis of nucleoside triphosphates to their monophosphate derivatives, with a high preference for the non-canonical purine nucleotides XTP (xanthosine triphosphate), dITP (deoxyinosine triphosphate) and ITP. Seems to function as a house-cleaning enzyme that removes non-canonical purine nucleotides from the nucleotide pool, thus preventing their incorporation into DNA/RNA and avoiding chromosomal lesions. This is dITP/XTP pyrophosphatase from Albidiferax ferrireducens (strain ATCC BAA-621 / DSM 15236 / T118) (Rhodoferax ferrireducens).